The sequence spans 504 residues: Peroxisome proliferator-activated receptor gamma (504 aa).

Phosphoserine; by MAPK is present on serine 111. Residues 135–209 (AIECRVCGDK…VGMSHNAIRF (75 aa)) constitute a DNA-binding region (nuclear receptor). 2 consecutive NR C4-type zinc fingers follow at residues 138–158 (CRVC…CEGC) and 175–197 (CDLN…FQKC). The tract at residues 204-279 (HNAIRFGRMP…DKSPFVIYDM (76 aa)) is interaction with FAM120B. The NR LBD domain occupies 237–502 (DLRALAKHLY…HPLLQEIYKD (266 aa)). Lysine 251 is covalently cross-linked (Glycyl lysine isopeptide (Lys-Gly) (interchain with G-Cter in ubiquitin)). The 9aaTAD signature appears at 494-502 (PLLQEIYKD).

The protein belongs to the nuclear hormone receptor family. NR1 subfamily. Interacts with FOXO1 (acetylated form). Heterodimer with other nuclear receptors, such as RXRA. The heterodimer with the retinoic acid receptor RXRA is called adipocyte-specific transcription factor ARF6. Interacts with NCOA6 coactivator, leading to a strong increase in transcription of target genes. Interacts with coactivator PPARBP, leading to a mild increase in transcription of target genes. Interacts with NOCA7 in a ligand-inducible manner. Interacts with NCOA1 and NCOA2 LXXLL motifs. Interacts with ASXL1, ASXL2, DNTTIP2, FAM120B, MAP2K1/MEK1, NR0B2, PDPK1, PRDM16, PRMT2 and TGFB1I1. Interacts (when activated by agonist) with PPP5C. Interacts with HELZ2 and THRAP3; the interaction stimulates the transcriptional activity of PPARG. Interacts with PER2, the interaction is ligand dependent and blocks PPARG recruitment to target promoters. Interacts with NOCT. Interacts with ACTN4. Interacts (when in the liganded conformation) with GPS2. Interacts with CRY1 and CRY2 in a ligand-dependent manner. In the absence of hormonal ligand, interacts with TACC1. In macrophages, interacts with PAQR3 and STUB1; the interactions promote PPARG poylubiquitination and STUB1-mediated degradation. Post-translationally, phosphorylated at basal conditions and dephosphorylated when treated with the ligand. May be dephosphorylated by PPP5C. The phosphorylated form may be inactive and dephosphorylation induces adipogenic activity. Ubiquitinated by E3 ubiquitin-protein ligase complex containing FBXO9; leading to proteasomal degradation. Ubiquitinated at Lys-251 by TRIM55 leading to proteasomal degradation. Ubiquitinated by E3 ubiquitin-protein ligase STUB1/CHIP; leading to proteasomal degradation. Highest expression in adipose tissue and lower in spleen. Very low levels in kidney, intestine, lung and muscle.

It localises to the nucleus. The protein resides in the cytoplasm. With respect to regulation, PDPK1 activates its transcriptional activity independently of its kinase activity. In terms of biological role, nuclear receptor that binds peroxisome proliferators such as hypolipidemic drugs and fatty acids. Once activated by a ligand, the nuclear receptor binds to DNA specific PPAR response elements (PPRE) and modulates the transcription of its target genes, such as acyl-CoA oxidase. It therefore controls the peroxisomal beta-oxidation pathway of fatty acids. Key regulator of adipocyte differentiation and glucose homeostasis. ARF6 acts as a key regulator of the tissue-specific adipocyte P2 (aP2) enhancer. Acts as a critical regulator of gut homeostasis by suppressing NF-kappa-B-mediated pro-inflammatory responses. Plays a role in the regulation of cardiovascular circadian rhythms by regulating the transcription of BMAL1 in the blood vessels. The chain is Peroxisome proliferator-activated receptor gamma (PPARG) from Sus scrofa (Pig).